The sequence spans 26 residues: Toxin TdII-1 (26 aa).

This sequence belongs to the long (4 C-C) scorpion toxin superfamily. Sodium channel inhibitor family. Beta subfamily. In terms of tissue distribution, expressed by the venom gland.

Its subcellular location is the secreted. In terms of biological role, beta toxins bind voltage-independently at site-4 of sodium channels (Nav) and shift the voltage of activation toward more negative potentials thereby affecting sodium channel activation and promoting spontaneous and repetitive firing. This toxin is active against mammals and crustaceans. The sequence is that of Toxin TdII-1 from Tityus discrepans (Venezuelan scorpion).